We begin with the raw amino-acid sequence, 574 residues long: Multidrug and toxin extrusion protein 1 (574 aa).

The Cytoplasmic segment spans residues 1-51 (MEGQAAETNHRAETVVRAELCLSAEQGPETTAYSQKRCLFLPMEVWQEAQQ). The chain crosses the membrane as a helical span at residues 52 to 72 (LLALAAPAFLSQLMIFLISIV). The Extracellular segment spans residues 73 to 86 (SSIFCGHLGKVELD). Residues 87 to 107 (AVSLAITIINITGVAVGTGLA) traverse the membrane as a helical segment. The Cytoplasmic segment spans residues 108 to 133 (GACDTLISQTFGGSNLKLVGIILQRG). Residues 134–154 (ILILLLFCFPCWALLINTESI) traverse the membrane as a helical segment. Residues 155–168 (LLLFRQDPEVSKLT) lie on the Extracellular side of the membrane. A helical membrane pass occupies residues 169–189 (QIYVLIFLPALPAAFLYQLLA). Topologically, residues 190–204 (KYLQNQGIIYPQVLT) are cytoplasmic. Residues 205–225 (GFIANIFNALFNYILLYVLGL) form a helical membrane-spanning segment. Residues 226–230 (GVMGS) lie on the Extracellular side of the membrane. Residues 231 to 251 (ACANTVSQFIQMILLFLYIVW) traverse the membrane as a helical segment. Residues 252-271 (RRLYADTWGGWSQACFEEWG) lie on the Cytoplasmic side of the membrane. Residues 272–291 (AFIRLAVASMLMLCIEWWAF) traverse the membrane as a helical segment. At 292-309 (EISMFLAGVLGMVDLAAQ) the chain is on the extracellular side. The helical transmembrane segment at 310–330 (AIIYQVAIVVYLIPLGLCIAG) threads the bilayer. The Cytoplasmic segment spans residues 331-350 (SIRVGHGLGAGNTEQAKRSA). Residues 351–371 (LVVLCMTELCALLSGILLATL) traverse the membrane as a helical segment. Over 372 to 384 (KDVVAYIFTSDPN) the chain is Extracellular. Residues 385–405 (IVALVSYVLPVYSACLLFDAC) traverse the membrane as a helical segment. Over 406–430 (VAACGGILRGSGKLKVGAISHTVGY) the chain is Cytoplasmic. The chain crosses the membrane as a helical span at residues 431–451 (YVIGLPLGISLMFAAKLGIIG). Residues 452-453 (FW) are Extracellular-facing. The helical transmembrane segment at 454 to 472 (FGILACGIAQSIFLIIFVF) threads the bilayer. Residues 473–549 (KIDWKRASEE…AGAAQHTRTL (77 aa)) are Cytoplasmic-facing. Residues 500–541 (KPSVYQEGCPTEQGDVDPGNVESIEFSQSSTSSEGTSPTPAG) are disordered. Residues 521 to 538 (ESIEFSQSSTSSEGTSPT) show a composition bias toward low complexity. Residues 550–570 (ILTRGLALGCAVGTLIIGIVI) form a helical membrane-spanning segment. Residues 571–574 (RLSV) lie on the Extracellular side of the membrane.

This sequence belongs to the multi antimicrobial extrusion (MATE) (TC 2.A.66.1) family.

Its subcellular location is the cell membrane. The protein resides in the apical cell membrane. The catalysed reaction is thiamine(out) + H(+)(in) = thiamine(in) + H(+)(out). It carries out the reaction estrone 3-sulfate(in) + H(+)(out) = estrone 3-sulfate(out) + H(+)(in). It catalyses the reaction creatinine(in) + H(+)(out) = creatinine(out) + H(+)(in). The enzyme catalyses agmatine(in) + H(+)(out) = agmatine(out) + H(+)(in). Its function is as follows. Multidrug efflux pump that functions as a H(+)/organic cation antiporter. Mediates the secretion of cationic compounds including drugs, toxins and endogenous metabolites. Plays a role physiological role in the excretion of drugs, toxins and endogenous metabolites through the kidney and liver, into urine and bile respectively. This chain is Multidrug and toxin extrusion protein 1 (slc47a1), found in Xenopus tropicalis (Western clawed frog).